The primary structure comprises 375 residues: Response regulator aspartate phosphatase E (375 aa).

Positions 24-95 (NVTDAEMLKA…HKKKLDNMRA (72 aa)) form a coiled coil. 6 TPR repeats span residues 96–129 (YYYN…IPTI), 177–210 (IQCH…AELL), 219–252 (ATAF…YRKI), 258–291 (PQAY…AVDF), 297–330 (MNLF…KGYP), and 333–366 (EELA…QKQI).

Belongs to the Rap family.

The protein localises to the cytoplasm. Its activity is regulated as follows. Phosphatase activity is inhibited by the phosphatase regulator PhrE. Its function is as follows. Involved in the regulation of sporulation. Acts as a phosphatase that specifically dephosphorylates the sporulation initiation phosphotransferase Spo0F and inhibits its activity. Probably plays a dispensable role in the overall context of sporulation initiation. The sequence is that of Response regulator aspartate phosphatase E (rapE) from Bacillus subtilis (strain 168).